The sequence spans 339 residues: Phosphate acyltransferase (339 aa).

It belongs to the PlsX family. In terms of assembly, homodimer. Probably interacts with PlsY.

Its subcellular location is the cytoplasm. It catalyses the reaction a fatty acyl-[ACP] + phosphate = an acyl phosphate + holo-[ACP]. The protein operates within lipid metabolism; phospholipid metabolism. Functionally, catalyzes the reversible formation of acyl-phosphate (acyl-PO(4)) from acyl-[acyl-carrier-protein] (acyl-ACP). This enzyme utilizes acyl-ACP as fatty acyl donor, but not acyl-CoA. This is Phosphate acyltransferase from Helicobacter acinonychis (strain Sheeba).